Consider the following 562-residue polypeptide: MNIDVANLLTGNYILLLFVVLALGLCLGKLRLGSIQLGNSIGVLVVSLLLGQQHFSMNTDALNLGFMLFIFCVGVEAGPNFFSIFFRDGKNYLMLALVMVASALCIALGLGKLFRWDIGLTAGMLAGSMTSTPVLVGAGDTLRQTMADNPQLGQLQDHLSLGYALTYLVGLVSLIFGARYLPKLQHQDLPTSAQQIARERGLDNDTQRKVFLPVIRAYRVGPELVAWADGKNLRELGIYSQTGCYIERIRRNGILATPDGDAVLQVGDEIALVGYPDAHARLDPSFRNGKEVFDRDLLDMRIVTEEIVVKNSNAVSKRLSQVKLTDHGCFLNRVIRSQIEMPIDDNIVLNKGDVLQVSGDARRVKSVADRIGFISIHSQVTDLLAFCAFFIIGLMIGLITFQFTGFSFGIGNAAGLLFAGIMLGFLRANHPTFGYIPQGALNMVKEFGLMVFMAGVGLSAGAGMRHGLGEVGGQMLIAGLIVSLVPVVICFLFGAFVLRMNRALLFGAIMGARTCAPAMDIINDASRSNIPALGYAGTYAIANVLLTLAGTLIIIVWPGVVG.

Helical transmembrane passes span 8-28 (LLTGNYILLLFVVLALGLCLG), 32-52 (LGSIQLGNSIGVLVVSLLLGQ), 66-86 (FMLFIFCVGVEAGPNFFSIFF), 94-114 (MLALVMVASALCIALGLGKLF), 118-138 (IGLTAGMLAGSMTSTPVLVGA), and 158-178 (HLSLGYALTYLVGLVSLIFGA). RCK C-terminal domains follow at residues 202–288 (LDND…SFRN) and 290–373 (KEVF…RIGF). The next 5 helical transmembrane spans lie at 383–403 (LLAFCAFFIIGLMIGLITFQF), 406–426 (FSFGIGNAAGLLFAGIMLGFL), 443–463 (MVKEFGLMVFMAGVGLSAGAG), 477–497 (IAGLIVSLVPVVICFLFGAFV), and 541–561 (IANVLLTLAGTLIIIVWPGVV).

This sequence belongs to the AAE transporter (TC 2.A.81) family. YbjL subfamily.

It is found in the cell membrane. This is Putative transport protein NT01EI_2530 from Edwardsiella ictaluri (strain 93-146).